Reading from the N-terminus, the 426-residue chain is Mediator of RNA polymerase II transcription subunit 1 (426 aa).

The interval 324-356 (VGDAPAPAAQPPLHRRRSSNKGCRRASAAESAT) is disordered. Residues 336-347 (LHRRRSSNKGCR) show a composition bias toward basic residues.

This sequence belongs to the Mediator complex subunit 1 family. Component of the Mediator complex.

It is found in the nucleus. Functionally, component of the Mediator complex, a coactivator involved in the regulated transcription of nearly all RNA polymerase II-dependent genes. Mediator functions as a bridge to convey information from gene-specific regulatory proteins to the basal RNA polymerase II transcription machinery. Mediator is recruited to promoters by direct interactions with regulatory proteins and serves as a scaffold for the assembly of a functional preinitiation complex with RNA polymerase II and the general transcription factors. This Eremothecium gossypii (strain ATCC 10895 / CBS 109.51 / FGSC 9923 / NRRL Y-1056) (Yeast) protein is Mediator of RNA polymerase II transcription subunit 1 (MED1).